The primary structure comprises 326 residues: Pyruvate dehydrogenase E1 component subunit alpha (326 aa).

As to quaternary structure, heterodimer of an alpha and a beta chain. Requires thiamine diphosphate as cofactor.

The catalysed reaction is N(6)-[(R)-lipoyl]-L-lysyl-[protein] + pyruvate + H(+) = N(6)-[(R)-S(8)-acetyldihydrolipoyl]-L-lysyl-[protein] + CO2. The pyruvate dehydrogenase complex catalyzes the overall conversion of pyruvate to acetyl-CoA and CO(2). It contains multiple copies of three enzymatic components: pyruvate dehydrogenase (E1), dihydrolipoamide acetyltransferase (E2) and lipoamide dehydrogenase (E3). This is Pyruvate dehydrogenase E1 component subunit alpha (pdhA) from Rickettsia felis (strain ATCC VR-1525 / URRWXCal2) (Rickettsia azadi).